Here is a 339-residue protein sequence, read N- to C-terminus: Ribosomal RNA small subunit methyltransferase H (339 aa).

Residues 40–42 (GGY), Asp58, Phe85, Asp106, and Gln113 contribute to the S-adenosyl-L-methionine site.

It belongs to the methyltransferase superfamily. RsmH family.

It localises to the cytoplasm. The enzyme catalyses cytidine(1402) in 16S rRNA + S-adenosyl-L-methionine = N(4)-methylcytidine(1402) in 16S rRNA + S-adenosyl-L-homocysteine + H(+). Specifically methylates the N4 position of cytidine in position 1402 (C1402) of 16S rRNA. The sequence is that of Ribosomal RNA small subunit methyltransferase H from Parvibaculum lavamentivorans (strain DS-1 / DSM 13023 / NCIMB 13966).